The following is a 424-amino-acid chain: Putative ankyrin repeat protein R858 (424 aa).

ANK repeat units lie at residues 115 to 144, 147 to 177, 184 to 215, and 219 to 252; these read HLMCACIYSINDSNLELVKLLVNNFNFTKR, TDHTALSYAFKNPGNIKIIGFLLNYIESDYF, INDSLIYWSKTDYLPCIEMAKLLIKAEASINY, and TGSTILINIINNKNYYNITDLVKFLLTEGVDIHE.

The sequence is that of Putative ankyrin repeat protein R858 from Acanthamoeba polyphaga (Amoeba).